Here is a 194-residue protein sequence, read N- to C-terminus: Anaphase-promoting complex subunit CDC26 (194 aa).

The tract at residues 47–194 (EPMDQSEPPR…PSSNTRSHRH (148 aa)) is disordered. 2 stretches are compositionally biased toward polar residues: residues 79 to 94 (GECTRTSIAPTLTSAR) and 102 to 112 (LTLSTPVNPVS). Composition is skewed to low complexity over residues 154–166 (DESPTPSDSPESP) and 174–194 (TPGNPTSTSGGPSSNTRSHRH).

It belongs to the CDC26 family. The APC/C complex is probably composed of at least 12 subunits: apc-2, apc-10, apc-11, cdc-26, emb-1, emb-27, emb-30, mat-1, mat-2, mat-3, such-1 and gfi-3.

It localises to the nucleus. The protein operates within protein modification; protein ubiquitination. Probable component of the anaphase promoting complex/cyclosome (APC/C), a cell cycle-regulated E3 ubiquitin ligase that controls progression through mitosis and the G1 phase of the cell cycle. The APC/C complex acts by mediating ubiquitination and subsequent degradation of target proteins. Developmental role in early embryogenesis and the metaphase to anaphase transition in meiosis and mitosis. Required for embryonic anterior-posterior axis formation. The chain is Anaphase-promoting complex subunit CDC26 from Caenorhabditis elegans.